Here is a 602-residue protein sequence, read N- to C-terminus: Elongation factor 4 (602 aa).

A tr-type G domain is found at 7 to 188 (ENIRNFSIIA…SIIRLVPPPK (182 aa)). GTP is bound by residues 19 to 24 (DHGKST) and 135 to 138 (NKID).

It belongs to the TRAFAC class translation factor GTPase superfamily. Classic translation factor GTPase family. LepA subfamily.

Its subcellular location is the cell inner membrane. The enzyme catalyses GTP + H2O = GDP + phosphate + H(+). Its function is as follows. Required for accurate and efficient protein synthesis under certain stress conditions. May act as a fidelity factor of the translation reaction, by catalyzing a one-codon backward translocation of tRNAs on improperly translocated ribosomes. Back-translocation proceeds from a post-translocation (POST) complex to a pre-translocation (PRE) complex, thus giving elongation factor G a second chance to translocate the tRNAs correctly. Binds to ribosomes in a GTP-dependent manner. This is Elongation factor 4 from Chlamydia trachomatis serovar L2 (strain ATCC VR-902B / DSM 19102 / 434/Bu).